Consider the following 445-residue polypeptide: 3-dehydroquinate synthase, chloroplastic (445 aa).

A chloroplast-targeting transit peptide spans 1–68 (MAAFSLSAKQ…RASASSTAPV (68 aa)). Residues Asn122, 153 to 155 (DGE), Lys158, 186 to 191 (GGVIGD), 211 to 212 (TT), Lys224, Lys233, and 251 to 254 (TLNT) each bind NAD(+). Residue Glu266 coordinates a divalent metal cation. An NAD(+)-binding site is contributed by Lys308. His329 and His346 together coordinate a divalent metal cation.

Belongs to the sugar phosphate cyclases superfamily. Dehydroquinate synthase family. In terms of assembly, homodimer. A divalent metal cation is required as a cofactor. Requires NAD(+) as cofactor.

Its subcellular location is the plastid. The protein localises to the chloroplast. The catalysed reaction is 7-phospho-2-dehydro-3-deoxy-D-arabino-heptonate = 3-dehydroquinate + phosphate. It participates in metabolic intermediate biosynthesis; chorismate biosynthesis; chorismate from D-erythrose 4-phosphate and phosphoenolpyruvate: step 2/7. In terms of biological role, catalyzes the second step in the shikimate pathway. The polypeptide is 3-dehydroquinate synthase, chloroplastic (DHQS) (Actinidia chinensis var. chinensis (Chinese soft-hair kiwi)).